Reading from the N-terminus, the 374-residue chain is N5-carboxyaminoimidazole ribonucleotide synthase (374 aa).

ATP contacts are provided by residues arginine 108, lysine 148, glycine 153–glutamine 159, glutamate 183–leucine 186, glutamate 191, histidine 214, and asparagine 266–glutamate 267. The region spanning lysine 112–threonine 296 is the ATP-grasp domain.

Belongs to the PurK/PurT family. In terms of assembly, homodimer.

It carries out the reaction 5-amino-1-(5-phospho-beta-D-ribosyl)imidazole + hydrogencarbonate + ATP = 5-carboxyamino-1-(5-phospho-D-ribosyl)imidazole + ADP + phosphate + 2 H(+). It functions in the pathway purine metabolism; IMP biosynthesis via de novo pathway; 5-amino-1-(5-phospho-D-ribosyl)imidazole-4-carboxylate from 5-amino-1-(5-phospho-D-ribosyl)imidazole (N5-CAIR route): step 1/2. Its function is as follows. Catalyzes the ATP-dependent conversion of 5-aminoimidazole ribonucleotide (AIR) and HCO(3)(-) to N5-carboxyaminoimidazole ribonucleotide (N5-CAIR). The protein is N5-carboxyaminoimidazole ribonucleotide synthase of Staphylococcus aureus (strain MSSA476).